The chain runs to 135 residues: Large ribosomal subunit protein uL16c (135 aa).

This sequence belongs to the universal ribosomal protein uL16 family. Part of the 50S ribosomal subunit.

The protein resides in the plastid. Its subcellular location is the chloroplast. The sequence is that of Large ribosomal subunit protein uL16c from Stigeoclonium helveticum (Green alga).